Reading from the N-terminus, the 145-residue chain is Holo-[acyl-carrier-protein] synthase (145 aa).

Positions 8 and 59 each coordinate Mg(2+).

Belongs to the P-Pant transferase superfamily. AcpS family. Mg(2+) serves as cofactor.

It is found in the cytoplasm. It carries out the reaction apo-[ACP] + CoA = holo-[ACP] + adenosine 3',5'-bisphosphate + H(+). Functionally, transfers the 4'-phosphopantetheine moiety from coenzyme A to a Ser of acyl-carrier-protein. This Granulibacter bethesdensis (strain ATCC BAA-1260 / CGDNIH1) protein is Holo-[acyl-carrier-protein] synthase.